The following is a 187-amino-acid chain: Dirigent protein 6 (187 aa).

An N-terminal signal peptide occupies residues 1–29 (MAFLVEKQLFKALFSFFLLVLLFSDTVLS). An intrachain disulfide couples C40 to C186. N59 and N123 each carry an N-linked (GlcNAc...) asparagine glycan.

Belongs to the plant dirigent protein family. In terms of assembly, homodimer. As to expression, expressed in roots, cotyledon veins, leaf trichomes, flowers, siliques, and meristems. Present in interfascicular/vascular cambia and developing xylem.

The protein localises to the secreted. The protein resides in the extracellular space. It localises to the apoplast. Its function is as follows. Dirigent proteins impart stereoselectivity on the phenoxy radical-coupling reaction, yielding optically active lignans from two molecules of coniferyl alcohol in the biosynthesis of lignans, flavonolignans, and alkaloids and thus plays a central role in plant secondary metabolism. Enantiocomplementary dirigent protein that mediates the laccase-catalyzed enantioselective oxidative phenol coupling of (E)-coniferyl alcohol to (-)-pinoresinol. The chain is Dirigent protein 6 (DIR6) from Arabidopsis thaliana (Mouse-ear cress).